A 224-amino-acid polypeptide reads, in one-letter code: Lipoprotein-releasing system ATP-binding protein LolD (224 aa).

Positions 5-224 (LRAENIKKVI…GKVVGEITRV (220 aa)) constitute an ABC transporter domain. An ATP-binding site is contributed by 37–44 (GASGSGKS).

It belongs to the ABC transporter superfamily. Lipoprotein translocase (TC 3.A.1.125) family. The complex is composed of two ATP-binding proteins (LolD) and two transmembrane proteins (LolC and LolE).

The protein localises to the cell inner membrane. Functionally, part of the ABC transporter complex LolCDE involved in the translocation of mature outer membrane-directed lipoproteins, from the inner membrane to the periplasmic chaperone, LolA. Responsible for the formation of the LolA-lipoprotein complex in an ATP-dependent manner. This Aquifex aeolicus (strain VF5) protein is Lipoprotein-releasing system ATP-binding protein LolD.